The sequence spans 492 residues: MDTFQLLLAVGVCFWIYFLWSRRRLYMMHFKIPGPMGLPILGIAFEYLITYKRKMSIRTKYMDIYGSTCLVWVGPTPFVITRDPKIAEEIFLSPECLNRSSIFSKPVNSCTGDGLLSLEASKWVDRRKNLNPAFKQNVLLSFLPIFNSEAKTLVAFLDSLVGQGEKKVRDDIVRWSFRIATQTTVGTDVKKDASFKNDSVLKSYETFMKIIVMNVLLPFTHNKIFSTLGGFETQKALAKSNVNKMIGTIVDKKLMTKPESGSQPEITSVINKAIELHRNGEMSREEVQSECCSFVVAAFETTGDTVYHALILLAMFPEHQDTVYQELKELFPVAGDFEVTYDDLQRMVFLERVVNETLRLIPSVPFTPRETIRDFRLSSGVVIPKGVGIGIDIFATHRNRDHWGTDPSSFNPDHFLPDNVRDRHPYAYIPFSKGRRNCIGWKYGLMSSKLALSKILRNCKVSTSFRYEDLEFVDNIGMELAQSPGLEFHRRT.

Cys438 is a binding site for heme.

Belongs to the cytochrome P450 family. Requires heme as cofactor.

Its subcellular location is the endoplasmic reticulum membrane. It localises to the microsome membrane. May be involved in the metabolism of insect hormones and in the breakdown of synthetic insecticides. The chain is Probable cytochrome P450 313a3 (Cyp313a3) from Drosophila melanogaster (Fruit fly).